We begin with the raw amino-acid sequence, 303 residues long: NAC domain-containing protein 48 (303 aa).

The region spanning 9 to 159 is the NAC domain; that stretch reads LPPGFRFHPT…DWVLCRIYNK (151 aa).

In terms of assembly, interacts with NAC071. In terms of tissue distribution, widely expressed.

The protein resides in the nucleus. Its function is as follows. Transcription activator that binds to the promoter of the stress response gene LEA19. Involved in tolerance to abiotic stresses. Transcription activator involved in response to abiotic and biotic stresses. Involved in drought and salt stress responses, and defense response to the rice blast fungus. Transcription activator involved tolerance to cold and salt stresses. Transcription activator involved in tolerance to drought stress. Targets directly and activates genes involved in membrane modification, nicotianamine (NA) biosynthesis, glutathione relocation, accumulation of phosphoadenosine phosphosulfate and glycosylation in roots. Controls root growth at early vegetative stage through chromatin modification and histone lysine deacytaltion by HDAC1. This is NAC domain-containing protein 48 from Oryza sativa subsp. japonica (Rice).